Consider the following 617-residue polypeptide: RNA polymerase sigma factor RpoD (617 aa).

The tract at residues 170-220 (PDDGSLPAEEVEPVNLKDDSADSKEKDDEEEESDDSSDSDDEGDGGPDPEE) is disordered. Basic and acidic residues predominate over residues 184 to 195 (NLKDDSADSKEK). Acidic residues predominate over residues 196–218 (DDEEEESDDSSDSDDEGDGGPDP). The interval 383 to 453 (MVEANLRLVI…TRSIADQART (71 aa)) is sigma-70 factor domain-2. The Interaction with polymerase core subunit RpoC signature appears at 407-410 (DLIQ). Residues 462–538 (ETINKLNRIS…DSTMQSPIEM (77 aa)) form a sigma-70 factor domain-3 region. Positions 551-604 (VLAGLTAREAKVLRMRFGIDMNTDHTLEEVGKQFDVTRERIRQIEAKALRKLRH) are sigma-70 factor domain-4. Positions 577 to 596 (LEEVGKQFDVTRERIRQIEA) form a DNA-binding region, H-T-H motif.

It belongs to the sigma-70 factor family. RpoD/SigA subfamily. In terms of assembly, interacts transiently with the RNA polymerase catalytic core.

It localises to the cytoplasm. Sigma factors are initiation factors that promote the attachment of RNA polymerase to specific initiation sites and are then released. This sigma factor is the primary sigma factor during exponential growth. This Pseudomonas aeruginosa (strain ATCC 15692 / DSM 22644 / CIP 104116 / JCM 14847 / LMG 12228 / 1C / PRS 101 / PAO1) protein is RNA polymerase sigma factor RpoD.